The primary structure comprises 1221 residues: MIDVNKFESMQIGLASPNKIRSWSYGEVKKPETINYRTLKPEKDGLFDERIFGPTKDYACACGKYKGVRYKGIVCDRCGVEVTTSHVRRERMGHIELAAPVTHIWYFKGIPSRMGLVLDVSPKQLEEVIYFAAYIVIDPGDTGLEAKQLLTEAEYREEKAKYGNRFVAKMGAEAIRDLLKQVDLDKEVTALKAELQTLKGQKRTRAIRRLDILDAFRNSGNKPEWMVMETVPVIPPDLRPMVQLEGGRFATSDLNDLYRRVINRNNRLKKLLDMHAPGLIVQNEERMLQEAVDALIDNGRRGRPVVGPGNRPLKSISHMLKGKQGRFRQNLLGKRVDYSGRSVIDVSPELKFYQCGVPRPMALELFKPFVMRELVRRGIASNIKNAKRKIDREDDDIWDVLEYVIKERPVLLNRAPTLHRLSIQAFEPVLVPGKALRLHPLACEAYNADFDGDQMAIHVPLSDEAVAESRLLMLAAHHILTPKDGTPIVTPSQDIVLGNYWLTQAEIGREGEGMIFATPEEATIAYNNGDIHYHTIIGVSAASMPKKDWGAGHEDSIFVTTYGRLVFNSLFPDDYFYINEPTQDNLKQPMADKYFLEDGQDIQDKIAEIGQDLVATPFKKGFLGDTISEIYKRYRVQRTSEYLDDLKEMGYSASTISGLTIGMADIPETKTKDALVAEARKQVKQVSKMFRRGKLSDKERHDNIIKIWTDCKDAVQQEIAEFKDQKNPISVMQQSGARGNISNFTQLAGMRGLMATPSGELFEIPVISNFKEGLTVLELFMSTHGARKGMTDTALKTAQSGYLTRRLVDVAQDVIIREDDCGTDRGITAKAIVDKDAGLIESLYDRLVGRFTNRTIRDPQTGEVICSKGVLMDEQMAQKIVDAGVQEVQIRSILTCNTSHGICRKCYGRNLATAEEVEIGEAVGTVAAQSIGEPGTQLTLRTFHTGGVAGAEDITQGLPRVQELFEARNPKGRAVISEVDGVVDKIESNAAEHLQEITVKGKIDTRVYTIPYTAKPAVQEGDEIHRGDKLIPGSIDPKELIKVTDTLTTEEYILAEVQKSYRTQGVDLADKHAEVLTRQVLQKVRVLDPGETDILPGEVMDIAEFRDRNRDVIISGGIPATAQAYILGITKAALETNSFLSAASFQETTRVLTDASIRGKNDPLLGLKENVIIGKIIPAGTGMPIYRDQVPKADVQQPDSVYSIADLEKKMEDENKETESK.

Cys60, Cys62, Cys75, and Cys78 together coordinate Zn(2+). Asp449, Asp451, and Asp453 together coordinate Mg(2+). Zn(2+) contacts are provided by Cys821, Cys896, Cys903, and Cys906.

Belongs to the RNA polymerase beta' chain family. In terms of assembly, the RNAP catalytic core consists of 2 alpha, 1 beta, 1 beta' and 1 omega subunit. When a sigma factor is associated with the core the holoenzyme is formed, which can initiate transcription. Requires Mg(2+) as cofactor. Zn(2+) is required as a cofactor.

The enzyme catalyses RNA(n) + a ribonucleoside 5'-triphosphate = RNA(n+1) + diphosphate. DNA-dependent RNA polymerase catalyzes the transcription of DNA into RNA using the four ribonucleoside triphosphates as substrates. The polypeptide is DNA-directed RNA polymerase subunit beta' (Lactobacillus delbrueckii subsp. bulgaricus (strain ATCC BAA-365 / Lb-18)).